The primary structure comprises 497 residues: Bifunctional protein GlmU (497 aa).

The interval 1–241 (MSPETIGPAA…RWQVEGANDR (241 aa)) is pyrophosphorylase. UDP-N-acetyl-alpha-D-glucosamine is bound by residues 14–17 (LAAG), K28, Q81, 86–87 (GT), 112–114 (YGD), G151, E166, N181, and N239. D114 serves as a coordination point for Mg(2+). N239 contributes to the Mg(2+) binding site. The interval 242–262 (IQLSALAAEHNRRIIESWMRA) is linker. The segment at 263 to 497 (GVTVVDPATT…QATIEEGKQA (235 aa)) is N-acetyltransferase. UDP-N-acetyl-alpha-D-glucosamine contacts are provided by R344 and K362. Residue H374 is the Proton acceptor of the active site. 2 residues coordinate UDP-N-acetyl-alpha-D-glucosamine: Y377 and N388. Residues 397–398 (NY), S416, and A434 contribute to the acetyl-CoA site.

This sequence in the N-terminal section; belongs to the N-acetylglucosamine-1-phosphate uridyltransferase family. It in the C-terminal section; belongs to the transferase hexapeptide repeat family. Homotrimer. Requires Mg(2+) as cofactor.

The protein resides in the cytoplasm. The enzyme catalyses alpha-D-glucosamine 1-phosphate + acetyl-CoA = N-acetyl-alpha-D-glucosamine 1-phosphate + CoA + H(+). It catalyses the reaction N-acetyl-alpha-D-glucosamine 1-phosphate + UTP + H(+) = UDP-N-acetyl-alpha-D-glucosamine + diphosphate. It participates in nucleotide-sugar biosynthesis; UDP-N-acetyl-alpha-D-glucosamine biosynthesis; N-acetyl-alpha-D-glucosamine 1-phosphate from alpha-D-glucosamine 6-phosphate (route II): step 2/2. The protein operates within nucleotide-sugar biosynthesis; UDP-N-acetyl-alpha-D-glucosamine biosynthesis; UDP-N-acetyl-alpha-D-glucosamine from N-acetyl-alpha-D-glucosamine 1-phosphate: step 1/1. It functions in the pathway bacterial outer membrane biogenesis; LPS lipid A biosynthesis. Functionally, catalyzes the last two sequential reactions in the de novo biosynthetic pathway for UDP-N-acetylglucosamine (UDP-GlcNAc). The C-terminal domain catalyzes the transfer of acetyl group from acetyl coenzyme A to glucosamine-1-phosphate (GlcN-1-P) to produce N-acetylglucosamine-1-phosphate (GlcNAc-1-P), which is converted into UDP-GlcNAc by the transfer of uridine 5-monophosphate (from uridine 5-triphosphate), a reaction catalyzed by the N-terminal domain. The chain is Bifunctional protein GlmU from Paenarthrobacter aurescens (strain TC1).